Consider the following 467-residue polypeptide: Putative odorant receptor 85e (467 aa).

Residues 1–60 (MASLQFHGNVDADIRYDISLDPARESNLFRLLMGLQLANGTKPSPRLPKWWPKRLEMIGK) lie on the Cytoplasmic side of the membrane. Residues 61 to 81 (VLPKAYCSMVIFTSLHLGVLF) traverse the membrane as a helical segment. Residues 82-98 (TKTTLDVLPTGELQAIT) lie on the Extracellular side of the membrane. The chain crosses the membrane as a helical span at residues 99–119 (DALTMTIIYFFTGYGTIYWCL). Residues 120–159 (RSRRLLAYMEHMNREYRHHSLAGVTFVSSHAAFRMSRNFT) lie on the Cytoplasmic side of the membrane. The chain crosses the membrane as a helical span at residues 160 to 180 (VVWIMSCLLGVISWGVSPLML). Residues 181–212 (GIRMLPLQCWYPFDALGPGTYTAVYATQLFGQ) lie on the Extracellular side of the membrane. Residues 213 to 233 (IMVGMTFGFGGSLFVTLSLLL) traverse the membrane as a helical segment. The Cytoplasmic portion of the chain corresponds to 234 to 286 (LGQFDVLYCSLKNLDAHTKLLGGESVNGLSSLQEELLLGDSKRELNQYVLLQE). Residues 287 to 307 (HPTDLLRLSAGRKCPDQGNAF) traverse the membrane as a helical segment. Topologically, residues 308–334 (HNALVECIRLHRFILHCSQELENLFSP) are extracellular. Residues 335-355 (YCLVKSLQITFQLCLLVFVGV) traverse the membrane as a helical segment. At 356–367 (SGTREVLRIVNQ) the chain is on the cytoplasmic side. The helical transmembrane segment at 368–388 (LQYLGLTIFELLMFTYCGELL) threads the bilayer. Residues 389 to 467 (SRHSIRSGDA…LAAKKTESEL (79 aa)) are Extracellular-facing.

The protein belongs to the insect chemoreceptor superfamily. Heteromeric odorant receptor channel (TC 1.A.69) family. Or2a subfamily. Interacts with Orco. Complexes exist early in the endomembrane system in olfactory sensory neurons (OSNs), coupling these complexes to the conserved ciliary trafficking pathway. As to expression, expressed in 15% of the 120 sensory neurons within the maxillary palp.

It localises to the cell membrane. Odorant receptor which mediates acceptance or avoidance behavior, depending on its substrates. The odorant receptor repertoire encodes a large collection of odor stimuli that vary widely in identity, intensity, and duration. May form a complex with Orco to form odorant-sensing units, providing sensitive and prolonged odorant signaling and calcium permeability. The polypeptide is Putative odorant receptor 85e (Or85e) (Drosophila melanogaster (Fruit fly)).